The following is an 81-amino-acid chain: Translational regulator CsrA (81 aa).

This sequence belongs to the CsrA/RsmA family. As to quaternary structure, homodimer; the beta-strands of each monomer intercalate to form a hydrophobic core, while the alpha-helices form wings that extend away from the core.

Its subcellular location is the cytoplasm. In terms of biological role, a translational regulator that binds mRNA to regulate translation initiation and/or mRNA stability. Usually binds in the 5'-UTR at or near the Shine-Dalgarno sequence preventing ribosome-binding, thus repressing translation. Its main target seems to be the major flagellin gene, while its function is anatagonized by FliW. The chain is Translational regulator CsrA from Borreliella burgdorferi (strain ATCC 35210 / DSM 4680 / CIP 102532 / B31) (Borrelia burgdorferi).